A 448-amino-acid polypeptide reads, in one-letter code: N-succinylarginine dihydrolase (448 aa).

Substrate contacts are provided by residues 19-28 (GGLSYGNVAS), N110, and 137-138 (HR). E174 is a catalytic residue. Position 214 (R214) interacts with substrate. Residue H250 is part of the active site. Residues D252 and N365 each contribute to the substrate site. The Nucleophile role is filled by C371.

This sequence belongs to the succinylarginine dihydrolase family. As to quaternary structure, homodimer.

It catalyses the reaction N(2)-succinyl-L-arginine + 2 H2O + 2 H(+) = N(2)-succinyl-L-ornithine + 2 NH4(+) + CO2. It participates in amino-acid degradation; L-arginine degradation via AST pathway; L-glutamate and succinate from L-arginine: step 2/5. In terms of biological role, catalyzes the hydrolysis of N(2)-succinylarginine into N(2)-succinylornithine, ammonia and CO(2). This is N-succinylarginine dihydrolase from Pseudomonas aeruginosa (strain LESB58).